Consider the following 256-residue polypeptide: Ciliary microtubule associated protein 1A (256 aa).

3 STPGR repeats span residues 66 to 92 (PGPGYLVPSNITVKGKDGTPAYSIYGR), 181 to 206 (PGPGTYRVIDPGSYKHRPPQYSMTAR), and 217 to 242 (PGPGAYSPEKVVMSRPQAPNFSFGIR).

The protein belongs to the CIMAP family.

Its subcellular location is the cytoplasm. It is found in the cytoskeleton. It localises to the flagellum axoneme. Its function is as follows. Outer dense fibers are filamentous structures located on the outside of the axoneme in the midpiece and principal piece of the mammalian sperm tail. May help to maintain the passive elastic structures and elastic recoil of the sperm tail. The chain is Ciliary microtubule associated protein 1A (cimap1a) from Xenopus tropicalis (Western clawed frog).